We begin with the raw amino-acid sequence, 969 residues long: Isoleucine--tRNA ligase (969 aa).

The 'HIGH' region signature appears at 70 to 80 (PYANGAIHIGH). E601 contributes to the L-isoleucyl-5'-AMP binding site. The 'KMSKS' region motif lies at 642–646 (KMSKS). K645 contributes to the ATP binding site.

The protein belongs to the class-I aminoacyl-tRNA synthetase family. IleS type 1 subfamily. Monomer.

It localises to the cytoplasm. It carries out the reaction tRNA(Ile) + L-isoleucine + ATP = L-isoleucyl-tRNA(Ile) + AMP + diphosphate. Its function is as follows. Catalyzes the attachment of isoleucine to tRNA(Ile). As IleRS can inadvertently accommodate and process structurally similar amino acids such as valine, to avoid such errors it has two additional distinct tRNA(Ile)-dependent editing activities. One activity is designated as 'pretransfer' editing and involves the hydrolysis of activated Val-AMP. The other activity is designated 'posttransfer' editing and involves deacylation of mischarged Val-tRNA(Ile). This chain is Isoleucine--tRNA ligase, found in Caulobacter vibrioides (strain ATCC 19089 / CIP 103742 / CB 15) (Caulobacter crescentus).